The chain runs to 147 residues: uncharacterized protein (147 aa).

4 helical membrane-spanning segments follow: residues 13–33 (LSLVFGLLFTVSGIIEIIIGL), 45–65 (LFVGDVFGGLALLAVGIAYFL), 80–100 (YLFTASIIGLGIGVIAFLILI), and 116–136 (WGFFNDLTVYLVLGMLAIIPY).

It localises to the cell membrane. This is an uncharacterized protein from Methanocaldococcus jannaschii (strain ATCC 43067 / DSM 2661 / JAL-1 / JCM 10045 / NBRC 100440) (Methanococcus jannaschii).